A 370-amino-acid chain; its full sequence is Prolactin-releasing peptide receptor (370 aa).

The Extracellular portion of the chain corresponds to 1–62 (MASSTTRGPR…LQLVHQLKGL (62 aa)). N-linked (GlcNAc...) asparagine glycans are attached at residues Asn27 and Asn36. Residues 63–83 (IVLLYSVVVVVGLVGNCLLVL) traverse the membrane as a helical segment. The Cytoplasmic portion of the chain corresponds to 84 to 101 (VIARVRRLHNVTNFLIGN). Residues 102–122 (LALSDVLMCTACVPLTLAYAF) traverse the membrane as a helical segment. Topologically, residues 123 to 126 (EPRG) are extracellular. Residues 127 to 147 (WVFGGGLCHLVFFLQPVTVYV) form a helical membrane-spanning segment. Cys134 and Cys211 are joined by a disulfide. The Cytoplasmic portion of the chain corresponds to 148–175 (SVFTLTTIAVDRYVVLVHPLRRRISLRL). The chain crosses the membrane as a helical span at residues 176-196 (SAYAVLAIWALSAVLALPAAV). The Extracellular segment spans residues 197 to 225 (HTYHVELKPHDVRLCEEFWGSQERQRQLY). Residues 226–246 (AWGLLLVTYLLPLLVILLSYV) form a helical membrane-spanning segment. Over 247–276 (RVSVKLRNRVVPGCVTQSQADWDRARRRRT) the chain is Cytoplasmic. The helical transmembrane segment at 277 to 297 (FCLLVVIVVVFAVCWLPLHVF) threads the bilayer. The Extracellular segment spans residues 298–317 (NLLRDLDPHAIDPYAFGLVQ). Residues 318-338 (LLCHWLAMSSACYNPFIYAWL) form a helical membrane-spanning segment. At 339 to 369 (HDSFREELRKLLVAWPRKIAPHGQNMTVSVV) the chain is on the cytoplasmic side. Residues 365–370 (TVSVVI) form a required for interaction with GRIP1, GRIP2 and PICK1 region.

Belongs to the G-protein coupled receptor 1 family. Interacts through its C-terminal region with the PDZ domain-containing proteins GRIP1, GRIP2 and PICK1. Interacts with PDZ domains 4 and 5 of GRIP1 and with the PDZ domain of PICK1. As to expression, only detected in the pituitary gland and in all cell types of pituitary adenomas.

It is found in the cell membrane. Functionally, receptor for prolactin-releasing peptide (PrRP). Implicated in lactation, regulation of food intake and pain-signal processing. This is Prolactin-releasing peptide receptor (PRLHR) from Homo sapiens (Human).